Reading from the N-terminus, the 379-residue chain is Lipid-A-disaccharide synthase (379 aa).

This sequence belongs to the LpxB family.

The catalysed reaction is a lipid X + a UDP-2-N,3-O-bis[(3R)-3-hydroxyacyl]-alpha-D-glucosamine = a lipid A disaccharide + UDP + H(+). Its pathway is bacterial outer membrane biogenesis; LPS lipid A biosynthesis. In terms of biological role, condensation of UDP-2,3-diacylglucosamine and 2,3-diacylglucosamine-1-phosphate to form lipid A disaccharide, a precursor of lipid A, a phosphorylated glycolipid that anchors the lipopolysaccharide to the outer membrane of the cell. The polypeptide is Lipid-A-disaccharide synthase (Vibrio parahaemolyticus serotype O3:K6 (strain RIMD 2210633)).